A 167-amino-acid polypeptide reads, in one-letter code: 6,7-dimethyl-8-ribityllumazine synthase (167 aa).

Residues Phe23, 57 to 59, and 81 to 83 contribute to the 5-amino-6-(D-ribitylamino)uracil site; these read TYE and AVI. 86-87 lines the (2S)-2-hydroxy-3-oxobutyl phosphate pocket; the sequence is GT. Catalysis depends on His89, which acts as the Proton donor. Residue Phe119 participates in 5-amino-6-(D-ribitylamino)uracil binding. Arg133 contributes to the (2S)-2-hydroxy-3-oxobutyl phosphate binding site.

It belongs to the DMRL synthase family.

It catalyses the reaction (2S)-2-hydroxy-3-oxobutyl phosphate + 5-amino-6-(D-ribitylamino)uracil = 6,7-dimethyl-8-(1-D-ribityl)lumazine + phosphate + 2 H2O + H(+). It functions in the pathway cofactor biosynthesis; riboflavin biosynthesis; riboflavin from 2-hydroxy-3-oxobutyl phosphate and 5-amino-6-(D-ribitylamino)uracil: step 1/2. In terms of biological role, catalyzes the formation of 6,7-dimethyl-8-ribityllumazine by condensation of 5-amino-6-(D-ribitylamino)uracil with 3,4-dihydroxy-2-butanone 4-phosphate. This is the penultimate step in the biosynthesis of riboflavin. The polypeptide is 6,7-dimethyl-8-ribityllumazine synthase (Myxococcus xanthus (strain DK1622)).